The primary structure comprises 95 residues: Co-chaperonin GroES (95 aa).

Belongs to the GroES chaperonin family. Heptamer of 7 subunits arranged in a ring. Interacts with the chaperonin GroEL.

The protein resides in the cytoplasm. In terms of biological role, together with the chaperonin GroEL, plays an essential role in assisting protein folding. The GroEL-GroES system forms a nano-cage that allows encapsulation of the non-native substrate proteins and provides a physical environment optimized to promote and accelerate protein folding. GroES binds to the apical surface of the GroEL ring, thereby capping the opening of the GroEL channel. The polypeptide is Co-chaperonin GroES (Ruegeria pomeroyi (strain ATCC 700808 / DSM 15171 / DSS-3) (Silicibacter pomeroyi)).